The following is a 340-amino-acid chain: GTPase Obg (340 aa).

The Obg domain maps to 1–158 (MSFIDEAKVY…KYITLKLKII (158 aa)). The 167-residue stretch at 159–325 (SDIGIIGLPN…LSTLIQYIHK (167 aa)) folds into the OBG-type G domain. GTP contacts are provided by residues 165–172 (GLPNAGKS), 190–194 (FTTLE), 211–214 (DIPG), 278–281 (NKSD), and 306–308 (SSI). Positions 172 and 192 each coordinate Mg(2+).

It belongs to the TRAFAC class OBG-HflX-like GTPase superfamily. OBG GTPase family. In terms of assembly, monomer. It depends on Mg(2+) as a cofactor.

The protein resides in the cytoplasm. In terms of biological role, an essential GTPase which binds GTP, GDP and possibly (p)ppGpp with moderate affinity, with high nucleotide exchange rates and a fairly low GTP hydrolysis rate. Plays a role in control of the cell cycle, stress response, ribosome biogenesis and in those bacteria that undergo differentiation, in morphogenesis control. This chain is GTPase Obg, found in Ehrlichia chaffeensis (strain ATCC CRL-10679 / Arkansas).